Here is a 265-residue protein sequence, read N- to C-terminus: tRNA pseudouridine synthase A (265 aa).

The active-site Nucleophile is Asp-55. Residue Tyr-113 coordinates substrate.

The protein belongs to the tRNA pseudouridine synthase TruA family. In terms of assembly, homodimer.

The catalysed reaction is uridine(38/39/40) in tRNA = pseudouridine(38/39/40) in tRNA. Functionally, formation of pseudouridine at positions 38, 39 and 40 in the anticodon stem and loop of transfer RNAs. The chain is tRNA pseudouridine synthase A from Levilactobacillus brevis (strain ATCC 367 / BCRC 12310 / CIP 105137 / JCM 1170 / LMG 11437 / NCIMB 947 / NCTC 947) (Lactobacillus brevis).